Reading from the N-terminus, the 536-residue chain is Serine protease inhibitor 28Dc (536 aa).

An N-terminal signal peptide occupies residues 1-16 (MWRLLLALLLVSSVCC). The N-linked (GlcNAc...) asparagine glycan is linked to Asn355.

Belongs to the serpin family.

It localises to the secreted. Serine protease inhibitor which is required for pupal viability and plays an essential role in regulating the melanization reaction. Inhibits spontaneous melanization and appears to be involved in the melanization immune response to physical wounding in larvae and adults. Acts by negatively regulating the Hayan-phenoloxidase (PPO1) cascade in the hemolymph and possibly the trachea. May function by controlling the initial release of the activated form of PPO1, phenoloxidase (PO) and thus maintains PO availability for processes such as wound response and pigmentation. The protein is Serine protease inhibitor 28Dc of Drosophila melanogaster (Fruit fly).